Reading from the N-terminus, the 93-residue chain is UPF0369 protein RC0209 (93 aa).

Residues 1-24 (MDDKKDNRHLSKPAYREECTGDTE) are disordered. The RPE1 insert domain maps to 8–55 (RHLSKPAYREECTGDTERSTTAYMDILEDVSTGSTSKLPLEAKFVKIS).

This sequence belongs to the SDHAF4 family.

This Rickettsia conorii (strain ATCC VR-613 / Malish 7) protein is UPF0369 protein RC0209.